Reading from the N-terminus, the 352-residue chain is Protein RecA (352 aa).

Position 67–74 (67–74 (GPESSGKT)) interacts with ATP.

This sequence belongs to the RecA family.

It localises to the cytoplasm. Its function is as follows. Can catalyze the hydrolysis of ATP in the presence of single-stranded DNA, the ATP-dependent uptake of single-stranded DNA by duplex DNA, and the ATP-dependent hybridization of homologous single-stranded DNAs. It interacts with LexA causing its activation and leading to its autocatalytic cleavage. The protein is Protein RecA of Chlamydia trachomatis serovar A (strain ATCC VR-571B / DSM 19440 / HAR-13).